Here is a 216-residue protein sequence, read N- to C-terminus: Transmembrane protein 125 (216 aa).

4 consecutive transmembrane segments (helical) span residues 32-52 (LLCFSVAVILVAGCGAGGVAL), 65-85 (LAVGTVLCLLALLVLVKQLMS), 111-131 (AVVVLLSGFVLLVTGLTLAGL), and 144-164 (MLSVGITLASLGSVLLLGLLL).

It is found in the membrane. This chain is Transmembrane protein 125 (Tmem125), found in Mus musculus (Mouse).